Consider the following 1059-residue polypeptide: Kinesin-like protein KIN-7K, chloroplastic (1059 aa).

Low complexity-rich tracts occupy residues 1-35 (MSSRPSSSASSRRSSSPFSAGSRRPPTSSSSSAGS) and 43-58 (PRSYSTASSVSSSSHF). The N-terminal 48 residues, 1–48 (MSSRPSSSASSRRSSSPFSAGSRRPPTSSSSSAGSYLTGRLMPRSYST), are a transit peptide targeting the chloroplast. A disordered region spans residues 1-99 (MSSRPSSSAS…SPPSPVPFPS (99 aa)). The segment covering 59–69 (FGGGGGSGGGS) has biased composition (gly residues). The segment covering 70 to 87 (RSTTPGRRGSSSSSLVGP) has biased composition (low complexity). Positions 88–97 (VPSPPSPVPF) are enriched in pro residues. One can recognise a Kinesin motor domain in the interval 114–431 (SISVTIRFRP…LKFASRAKRV (318 aa)). 194-201 (GVTSSGKT) lines the ATP pocket. The stretch at 435–518 (AARNRMIDEK…IQRLTKLILV (84 aa)) forms a coiled coil. A disordered region spans residues 526–570 (ALTDTSSHQRHNSVNEEDKVSTSQDSSMLVQNDSATKDSLSSASP). Residues 546–569 (STSQDSSMLVQNDSATKDSLSSAS) show a composition bias toward polar residues. 3 coiled-coil regions span residues 640 to 674 (EGTKNQIDNLEREIREKRRHMRALEQKLMESGEAS), 700 to 781 (ELEL…EENR), and 862 to 910 (LEDM…LEND). The segment at 1013 to 1048 (CKVCFESATAAVLLPCRHFCLCKPCSLACSECPLCR) adopts an RING-type zinc-finger fold.

Belongs to the TRAFAC class myosin-kinesin ATPase superfamily. Kinesin family. KIN-7 subfamily.

It localises to the plastid. The protein resides in the chloroplast. The protein is Kinesin-like protein KIN-7K, chloroplastic of Oryza sativa subsp. japonica (Rice).